The chain runs to 223 residues: Endonuclease V (223 aa).

Residues Asp-35 and Asp-103 each contribute to the Mg(2+) site.

It belongs to the endonuclease V family. Mg(2+) is required as a cofactor.

It localises to the cytoplasm. It carries out the reaction Endonucleolytic cleavage at apurinic or apyrimidinic sites to products with a 5'-phosphate.. In terms of biological role, DNA repair enzyme involved in the repair of deaminated bases. Selectively cleaves double-stranded DNA at the second phosphodiester bond 3' to a deoxyinosine leaving behind the intact lesion on the nicked DNA. The protein is Endonuclease V of Cronobacter sakazakii (strain ATCC BAA-894) (Enterobacter sakazakii).